A 474-amino-acid chain; its full sequence is PRAME family member 7 (474 aa).

The LRR 1; degenerate repeat unit spans residues 97-122 (QSKLQVLDLRNVDENFCDIFSGATAS). One copy of the LRR 2; degenerate repeat lies at 177 to 201 (HVCCKELQVFGMPIHSIIEVLNMVE). The stretch at 202–228 (LDCIQEVEVCCPWELSTLVKFAPYLGQ) is one LRR 3; degenerate repeat. An LRR 4; degenerate repeat occupies 229–264 (MRNLRKLVLFNIRASACIPPDNKGQFIARFTSQFLK). LRR repeat units follow at residues 265–290 (LDYF…LRCL), 291–322 (QASL…RQLK), 323–341 (ELDL…PLTG), 347–374 (VATL…VLSR), and 375–399 (CSQL…LLRH).

Belongs to the PRAME family.

The sequence is that of PRAME family member 7 from Homo sapiens (Human).